A 162-amino-acid chain; its full sequence is Sorting nexin-12 (162 aa).

The segment at 1–20 is disordered; sequence MSDTAVADTRRLNSKPQDLT. Serine 2 carries the post-translational modification N-acetylserine. Residue tyrosine 23 is modified to Phosphotyrosine. The 125-residue stretch at 28 to 152 folds into the PX domain; the sequence is NFLEIDIFNP…HMFLQEEAID (125 aa). A 1,2-diacyl-sn-glycero-3-phospho-(1D-myo-inositol-3-phosphate)-binding residues include arginine 71, serine 73, lysine 96, and arginine 119. Residue serine 73 is modified to Phosphoserine.

It belongs to the sorting nexin family.

The protein localises to the membrane. May be involved in several stages of intracellular trafficking. This Homo sapiens (Human) protein is Sorting nexin-12 (SNX12).